We begin with the raw amino-acid sequence, 300 residues long: Ribonuclease HIII (300 aa).

Residues 83 to 300 (IPIIGSDEVG…THKAQALLTK (218 aa)) enclose the RNase H type-2 domain. A divalent metal cation-binding residues include Asp89, Glu90, and Asp194.

Belongs to the RNase HII family. RnhC subfamily. Mn(2+) is required as a cofactor. Mg(2+) serves as cofactor.

The protein localises to the cytoplasm. The catalysed reaction is Endonucleolytic cleavage to 5'-phosphomonoester.. Endonuclease that specifically degrades the RNA of RNA-DNA hybrids. This Streptococcus pyogenes serotype M28 (strain MGAS6180) protein is Ribonuclease HIII.